Consider the following 569-residue polypeptide: Cytochrome P450 monooxygenase abl1 (569 aa).

Cys-464 is a binding site for heme.

Belongs to the cytochrome P450 family. It depends on heme as a cofactor.

It functions in the pathway hormone biosynthesis. In terms of biological role, cytochrome P450 monooxygenase; part of the gene cluster that mediates the biosynthesis of abscisic acid (ABA), a phytohormone that acts antagonistically toward salicylic acid (SA), jasmonic acid (JA) and ethylene (ETH) signaling, to impede plant defense responses. The first step of the pathway catalyzes the reaction from farnesyl diphosphate to alpha-ionylideneethane performed by the alpha-ionylideneethane synthase abl3 via a three-step reaction mechanism involving 2 neutral intermediates, beta-farnesene and allofarnesene. The cytochrome P450 monooxygenase abl1 might then be involved in the conversion of alpha-ionylideneethane to alpha-ionylideneacetic acid. Alpha-ionylideneacetic acid is further converted to abscisic acid in 2 steps involving the cytochrome P450 monooxygenase abl2 and the short-chain dehydrogenase/reductase abl4, via the intermediates 1'-deoxy-ABA or 1',4'-trans-diol-ABA, depending on the order of action of these 2 enzymes. Abl2 is responsible for the hydroxylation of carbon atom C-1' and abl4 might be involved in the oxidation of the C-4' carbon atom. This Leptosphaeria maculans (strain JN3 / isolate v23.1.3 / race Av1-4-5-6-7-8) (Blackleg fungus) protein is Cytochrome P450 monooxygenase abl1.